Consider the following 123-residue polypeptide: Mediator of RNA polymerase II transcription subunit 9 (123 aa).

Residues 95–123 are a coiled coil; the sequence is WQLHIQEKKIELEKKTKHLQRLRESIQKQ.

It belongs to the Mediator complex subunit 9 family. As to quaternary structure, component of the Mediator complex.

The protein resides in the nucleus. Its function is as follows. Component of the Mediator complex, a coactivator involved in the regulated transcription of nearly all RNA polymerase II-dependent genes. Mediator functions as a bridge to convey information from gene-specific regulatory proteins to the basal RNA polymerase II transcription machinery. Mediator is recruited to promoters by direct interactions with regulatory proteins and serves as a scaffold for the assembly of a functional preinitiation complex with RNA polymerase II and the general transcription factors. This is Mediator of RNA polymerase II transcription subunit 9 (CSE2) from Kluyveromyces lactis (strain ATCC 8585 / CBS 2359 / DSM 70799 / NBRC 1267 / NRRL Y-1140 / WM37) (Yeast).